The sequence spans 75 residues: Putative antitoxin VapB12 (75 aa).

Its function is as follows. Putative antitoxin component of a possible type II toxin-antitoxin (TA) system. The cognate toxin is VapC12. The protein is Putative antitoxin VapB12 (vapB12) of Mycobacterium tuberculosis (strain CDC 1551 / Oshkosh).